The sequence spans 1664 residues: Peroxisome proliferator-activated receptor gamma coactivator-related protein 1 (1664 aa).

Disordered regions lie at residues 1–44 (MAAR…GTLG), 167–255 (LLTL…VASF), 436–555 (PVVP…EGPL), 681–701 (VDPV…VSSA), 735–793 (IESG…ADIP), 818–873 (CLVP…PTPP), and 1045–1068 (HGAP…HPKH). Positions 12-22 (APPPSGGPGPD) are enriched in pro residues. The segment covering 23–32 (PGGGARGSGW) has biased composition (gly residues). Low complexity predominate over residues 201 to 224 (SLPDPSWDFSPPSFLETSSPKLPS). Residue Ser-237 is modified to Phosphoserine. Residues 433-467 (VVEPVVPKEPQNPPANAAPGSQRARKGRKKKSKEQ) are necessary for interaction with CREB1 and NRF1 and for transcriptional coactivation. Basic residues predominate over residues 455–464 (RARKGRKKKS). Residues 482–499 (SSRGQSTVGTEVTSQVDN) show a composition bias toward polar residues. Over residues 522–531 (RAWARAWAAA) the composition is skewed to low complexity. The segment covering 533–549 (ENSSPKNLERSAGQSSP) has biased composition (polar residues). Phosphoserine occurs at positions 536 and 548. Pro residues predominate over residues 823–836 (GPSPASPSPEPPVS). The segment covering 862–873 (VQSVSPAVPTPP) has biased composition (low complexity). Position 1076 is a phosphoserine (Ser-1076). Disordered stretches follow at residues 1093–1130 (EEPA…STVP), 1182–1209 (SEAK…DIPQ), and 1334–1528 (VLSL…DHYQ). Basic and acidic residues predominate over residues 1096–1113 (ASERLKPETQETRPREKP). A compositionally biased stretch (low complexity) spans 1365–1383 (PSAPCLAPSSLLSPEASPC). The necessary for interaction with CREB1 and NRF1 stretch occupies residues 1379 to 1450 (EASPCRNDMN…SSSSSSSSSS (72 aa)). Basic residues predominate over residues 1400–1409 (RSMRCYRKAC). 2 positions are modified to phosphoserine: Ser-1411 and Ser-1413. 2 stretches are compositionally biased toward low complexity: residues 1427–1459 (SRSV…RSLS) and 1468–1500 (SSCS…SSSR). Positions 1501 to 1519 (SRSRSPSPRRRSDRRRRYS) are enriched in basic residues. Residues 1543-1619 (RVVFIGKIPG…QPFDLCFGGR (77 aa)) enclose the RRM domain.

Interacts with CREB1 and NRF1. Strongly expressed in heart and skeletal muscle, moderately in lung, placenta, intestine, liver, kidney, spleen, thymus, colon and brain. Also expressed in several oncocytic thyroid tumors.

It localises to the nucleus. Functionally, acts as a coactivator during transcriptional activation of nuclear genes related to mitochondrial biogenesis and cell growth. Involved in the transcription coactivation of CREB and NRF1 target genes. This chain is Peroxisome proliferator-activated receptor gamma coactivator-related protein 1 (PPRC1), found in Homo sapiens (Human).